Here is a 990-residue protein sequence, read N- to C-terminus: Sister chromatid cohesion protein PDS5 homolog E (990 aa).

HEAT repeat units follow at residues 31–57 (DATL…SVQK), 58–96 (ALHP…ITAP), 153–190 (DLVL…DESE), 191–228 (EVPM…SCTC), and 232–269 (PCIM…HNDV). The disordered stretch occupies residues 262-565 (TTQAHNDVKP…AGEEVESNTN (304 aa)). Residues 267-281 (NDVKPKDNEADEKIS) show a composition bias toward basic and acidic residues. Positions 302-314 (KGTRSKRSARGGT) are enriched in basic residues. Composition is skewed to polar residues over residues 328-342 (EGLS…ASGS) and 394-410 (VGQT…SSGR). Basic and acidic residues-rich tracts occupy residues 421–430 (TKMEETDHDV), 448–477 (PAKE…EKAD), and 503–512 (VHSDAKKKNS). A Nuclear localization signal 1 motif is present at residues 458–465 (VKKHEDGI). Short sequence motifs (nuclear localization signal) lie at residues 539 to 546 (TKKSEQAP) and 583 to 590 (DKKFYEGV). Positions 653-966 (KKRKIVSKNV…VGNEAEEDDQ (314 aa)) are disordered. Positions 662–673 (VEPSSSPEVRSS) are enriched in low complexity. 2 short sequence motifs (nuclear localization signal) span residues 677–684 (MKKKDSVT) and 715–722 (LKKLNGEP). The segment covering 727–742 (GRTGKKQKVTQAMHRK) has biased composition (basic residues). Residues 746–760 (DCDEQEDLETKDEED) are compositionally biased toward acidic residues. 3 stretches are compositionally biased toward basic and acidic residues: residues 761–810 (SLKL…KTNG), 819–890 (TDGK…KETN), and 898–947 (EEQK…DKET).

The protein belongs to the PDS5 family. In terms of assembly, interacts with the cohesin complex.

The protein localises to the nucleus. Functionally, cohesin cofactor dispensable during the meiotic division but playing an important role in DNA repair by homologous recombination (HR) probably by helping SMC5/SMC6 complex. Regulator of sister chromatid cohesion in mitosis which may stabilize cohesin complex association with chromatin. May couple sister chromatid cohesion during mitosis to DNA replication. Cohesion ensures that chromosome partitioning is accurate in both meiotic and mitotic cells and plays an important role in DNA repair. The chain is Sister chromatid cohesion protein PDS5 homolog E from Arabidopsis thaliana (Mouse-ear cress).